We begin with the raw amino-acid sequence, 755 residues long: LIM domain and actin-binding protein 1 (755 aa).

Met-1 carries the post-translational modification N-acetylmethionine. Phosphoserine is present on Ser-15. Positions 43–56 (KAAEEANMERKKNN) are enriched in basic and acidic residues. Positions 43-151 (KAAEEANMER…YPRSEDSHDF (109 aa)) are disordered. Positions 88-97 (DSLPNSSSDG) are enriched in polar residues. Ser-132 carries the post-translational modification Phosphoserine. A Required for interaction with NPC1L1 motif is present at residues 164 to 166 (CLG). Basic and acidic residues-rich tracts occupy residues 168–177 (SRHEAEKPEM) and 199–208 (MMFEKGEHSQ). The segment at 168–226 (SRHEAEKPEMSENTETSGKIEKYNVPLNRLKMMFEKGEHSQNKSPWTQGRNAGGRRLSE) is disordered. Phosphoserine occurs at positions 225, 230, and 242. Residues 241–379 (LSSSAFNSEK…ESSPSKTAKK (139 aa)) form a disordered region. A compositionally biased stretch (basic and acidic residues) spans 249 to 258 (EKNESKRNLE). Position 263 is a phosphoserine (Ser-263). The span at 292 to 305 (KPSESKTHKWEQKE) shows a compositional bias: basic and acidic residues. Residues 342 to 354 (CNSQGRSEAQQPI) show a composition bias toward polar residues. A phosphoserine mark is found at Ser-348, Ser-360, Ser-367, and Ser-372. Positions 363-375 (ARTSSLPESSPSK) are enriched in polar residues. The region spanning 386–446 (ESCVECQKTV…KPHFNQLFKS (61 aa)) is the LIM zinc-binding domain. Lys-437 carries the N6-succinyllysine modification. Disordered stretches follow at residues 468–493 (ENEETLGRPAQPPSAGETPHSPGVED) and 505–714 (SMEA…DTTT). At Ser-488 the chain carries Phosphoserine. A required for interaction with MYO5B region spans residues 491-511 (VEDAPIAKVGVLAASMEAKAS). Basic and acidic residues-rich tracts occupy residues 512–526 (SQREREENKPAETKK) and 555–566 (WPPEDEVCKTEA). The segment covering 599–611 (SSVKSPKPLSPSL) has biased composition (low complexity). 4 positions are modified to phosphoserine: Ser-600, Ser-603, Ser-608, and Ser-616. 2 stretches are compositionally biased toward basic and acidic residues: residues 638-653 (RPSREKESVGKSRWQS) and 662-673 (EAPRGRDGRSFE). 3 positions are modified to phosphoserine: Ser-697, Ser-722, and Ser-737.

As to quaternary structure, interacts with NPC1L1; bridges NPC1L1 with MYO5B. Interacts with MYO5B; bridges MYO5B with NPC1L1. Interacts with PXN; this complex stabilizes actin dynamics. Interacts with F-actin and G-actin. Interacts with LUZP1 (via C-terminus); both proteins restrict ciliation and may work together to regulate this process. Binds RAB40B (GTP-bound); interaction influences LIMA1 subcellular localization in lamellipodia during cell migration. Phosphorylation of the C-terminal region by MAPK1/MAPK3 reduces its association with F-actin and contributes to actin filament reorganization and enhanced cell motility. In terms of processing, ubiquitinated by the ECS(RAB40B) complex leading to its degradation. In terms of tissue distribution, expressed throughout the kidney, including renal cortex, medulla, and glomeruli. Expressed in glomeruli, tubular epithelial cells, and extraglomerular vascular endothelial cells (at protein level).

It is found in the cytoplasm. The protein localises to the cell junction. It localises to the focal adhesion. The protein resides in the cytoskeleton. Its subcellular location is the stress fiber. It is found in the cell membrane. The protein localises to the cell projection. It localises to the ruffle. The protein resides in the lamellipodium. Actin-binding protein involved in actin cytoskeleton regulation and dynamics. Increases the number and size of actin stress fibers and inhibits membrane ruffling. Inhibits actin filament depolymerization. Bundles actin filaments, delays filament nucleation and reduces formation of branched filaments. Acts as a negative regulator of primary cilium formation. Plays a role in cholesterol homeostasis. Influences plasma cholesterol levels through regulation of intestinal cholesterol absorption. May act as a scaffold protein by regulating NPC1L1 transportation, an essential protein for cholesterol absorption, to the plasma membrane by recruiting MYO5B to NPC1L1, and thus facilitates cholesterol uptake. In Rattus norvegicus (Rat), this protein is LIM domain and actin-binding protein 1.